Reading from the N-terminus, the 128-residue chain is MAKLTTEELIEAFKELSLIELSDFVKAFEETFDVTAAAPVAVAGAAPAAGDAGAAEEEKTEFDVVLESAGDKKIQVIKEVRGLTSLGLKEAKDLVDSAPKAVLEGATKEAADKAKEALEGAGATVTVK.

The protein belongs to the bacterial ribosomal protein bL12 family. As to quaternary structure, homodimer. Part of the ribosomal stalk of the 50S ribosomal subunit. Forms a multimeric L10(L12)X complex, where L10 forms an elongated spine to which 2 to 4 L12 dimers bind in a sequential fashion. Binds GTP-bound translation factors.

Its function is as follows. Forms part of the ribosomal stalk which helps the ribosome interact with GTP-bound translation factors. Is thus essential for accurate translation. The sequence is that of Large ribosomal subunit protein bL12 from Kocuria rhizophila (strain ATCC 9341 / DSM 348 / NBRC 103217 / DC2201).